Here is a 125-residue protein sequence, read N- to C-terminus: Fumarate reductase subunit D (125 aa).

A run of 3 helical transmembrane segments spans residues Phe-30 to Ile-50, Val-60 to Pro-80, and Ile-105 to Leu-125.

It belongs to the FrdD family. As to quaternary structure, part of an enzyme complex containing four subunits: a flavoprotein (FrdA), an iron-sulfur protein (FrdB), and two hydrophobic anchor proteins (FrdC and FrdD).

It is found in the cell inner membrane. Functionally, anchors the catalytic components of the fumarate reductase complex to the cell membrane, binds quinones. This Vibrio vulnificus (strain YJ016) protein is Fumarate reductase subunit D.